The sequence spans 1584 residues: Pentafunctional AROM polypeptide (1584 aa).

Residues 1–384 are 3-dehydroquinate synthase; sequence MSQDTDVVSV…YEKHATVVSD (384 aa). Residues 46–48, 83–86, 114–116, and aspartate 119 each bind NAD(+); these read DTN, ETSK, and GGV. Arginine 130 lines the 7-phospho-2-dehydro-3-deoxy-D-arabino-heptonate pocket. NAD(+) is bound at residue 139-140; the sequence is TT. 7-phospho-2-dehydro-3-deoxy-D-arabino-heptonate is bound by residues aspartate 146 and lysine 152. Lysine 161 provides a ligand contact to NAD(+). Asparagine 162 provides a ligand contact to 7-phospho-2-dehydro-3-deoxy-D-arabino-heptonate. NAD(+) contacts are provided by residues 179-182 and asparagine 190; that span reads FLET. Glutamate 194 serves as a coordination point for Zn(2+). Residues 194–197 and lysine 250 each bind 7-phospho-2-dehydro-3-deoxy-D-arabino-heptonate; that span reads EVIK. Glutamate 260 (proton acceptor; for 3-dehydroquinate synthase activity) is an active-site residue. Residues 264-268 and histidine 271 each bind 7-phospho-2-dehydro-3-deoxy-D-arabino-heptonate; that span reads RNLLN. Histidine 271 contacts Zn(2+). Catalysis depends on histidine 275, which acts as the Proton acceptor; for 3-dehydroquinate synthase activity. Residues histidine 287 and lysine 356 each coordinate 7-phospho-2-dehydro-3-deoxy-D-arabino-heptonate. A Zn(2+)-binding site is contributed by histidine 287. Residues 397-843 form an EPSP synthase region; that stretch reads VSPFDNSVSD…WDVLRNSFKI (447 aa). The For EPSP synthase activity role is filled by cysteine 825. Residues 863–1058 are shikimate kinase; the sequence is RASVILIGMR…IQKPHSFFLS (196 aa). Position 870-877 (870-877) interacts with ATP; it reads GMRGAGKT. Residues 1059 to 1280 are 3-dehydroquinase; sequence LTFPNINDAI…AAPGQLSVRQ (222 aa). Catalysis depends on histidine 1182, which acts as the Proton acceptor; for 3-dehydroquinate dehydratase activity. Residue lysine 1211 is the Schiff-base intermediate with substrate; for 3-dehydroquinate dehydratase activity of the active site. Residues 1293–1584 form a shikimate dehydrogenase region; sequence PKKFYLFGTP…YMVLCAKEHN (292 aa).

This sequence in the N-terminal section; belongs to the sugar phosphate cyclases superfamily. Dehydroquinate synthase family. In the 2nd section; belongs to the EPSP synthase family. It in the 3rd section; belongs to the shikimate kinase family. The protein in the 4th section; belongs to the type-I 3-dehydroquinase family. This sequence in the C-terminal section; belongs to the shikimate dehydrogenase family. In terms of assembly, homodimer. Zn(2+) serves as cofactor.

The protein localises to the cytoplasm. It catalyses the reaction 7-phospho-2-dehydro-3-deoxy-D-arabino-heptonate = 3-dehydroquinate + phosphate. The catalysed reaction is 3-dehydroquinate = 3-dehydroshikimate + H2O. It carries out the reaction shikimate + NADP(+) = 3-dehydroshikimate + NADPH + H(+). The enzyme catalyses shikimate + ATP = 3-phosphoshikimate + ADP + H(+). It catalyses the reaction 3-phosphoshikimate + phosphoenolpyruvate = 5-O-(1-carboxyvinyl)-3-phosphoshikimate + phosphate. Its pathway is metabolic intermediate biosynthesis; chorismate biosynthesis; chorismate from D-erythrose 4-phosphate and phosphoenolpyruvate: step 2/7. It participates in metabolic intermediate biosynthesis; chorismate biosynthesis; chorismate from D-erythrose 4-phosphate and phosphoenolpyruvate: step 3/7. It functions in the pathway metabolic intermediate biosynthesis; chorismate biosynthesis; chorismate from D-erythrose 4-phosphate and phosphoenolpyruvate: step 4/7. The protein operates within metabolic intermediate biosynthesis; chorismate biosynthesis; chorismate from D-erythrose 4-phosphate and phosphoenolpyruvate: step 5/7. Its pathway is metabolic intermediate biosynthesis; chorismate biosynthesis; chorismate from D-erythrose 4-phosphate and phosphoenolpyruvate: step 6/7. The AROM polypeptide catalyzes 5 consecutive enzymatic reactions in prechorismate polyaromatic amino acid biosynthesis. The chain is Pentafunctional AROM polypeptide from Schizosaccharomyces japonicus (strain yFS275 / FY16936) (Fission yeast).